Reading from the N-terminus, the 446-residue chain is MATILQNLPAGQKVGIAFSGGLDTSAALHWMKLKGALPYAYTANLGQPDEPDYDEIPRKALQYGAEKARLIDCRSQLAAEGIAALQSGAFHITTAGVTYFNTTPLGRAVTGTMLVSAMKDDDVNIWGDGSTFKGNDIERFYRYGLLTNPNLRIYKPWLDQLFIDELGGRAEMSAFMTQAGFGYKMSAEKAYSTDSNMLGATHEAKDLEHLNSGMKIVNPIMGVAFWKDEVEVKREEVTVRFEEGQPVALNGKTFSNTVELILEANRIGGRHGLGMSDQIENRIIEAKSRGIYEAPGLALLFIAYERLVTGIHNEDTIEQYRDNGRRLGRLLYQGRWFDPQAIMLRETAQRWVARAVTGEVTVELRRGNDYSILNTVSPNLTYKPERLSMEKVEDAPFSPLDRIGQLTMRNLDIVDTRDKLAIYTQAGLLSAGQGASPPQLKNDERK.

Residues 17-25 (AFSGGLDTS) and alanine 43 contribute to the ATP site. Residue tyrosine 99 participates in L-citrulline binding. 2 residues coordinate ATP: glycine 129 and threonine 131. L-aspartate contacts are provided by threonine 131, asparagine 135, and aspartate 136. Asparagine 135 contacts L-citrulline. ATP is bound at residue aspartate 136. L-citrulline is bound by residues arginine 139 and serine 192. Aspartate 194 provides a ligand contact to ATP. Positions 201, 203, and 280 each coordinate L-citrulline.

This sequence belongs to the argininosuccinate synthase family. Type 2 subfamily. Homotetramer.

The protein localises to the cytoplasm. The catalysed reaction is L-citrulline + L-aspartate + ATP = 2-(N(omega)-L-arginino)succinate + AMP + diphosphate + H(+). It participates in amino-acid biosynthesis; L-arginine biosynthesis; L-arginine from L-ornithine and carbamoyl phosphate: step 2/3. The polypeptide is Argininosuccinate synthase (Polaromonas sp. (strain JS666 / ATCC BAA-500)).